The chain runs to 64 residues: Large ribosomal subunit protein bL35 (64 aa).

This sequence belongs to the bacterial ribosomal protein bL35 family.

This Vibrio metschnikovii protein is Large ribosomal subunit protein bL35.